A 37-amino-acid polypeptide reads, in one-letter code: Large ribosomal subunit protein bL36c (37 aa).

This sequence belongs to the bacterial ribosomal protein bL36 family.

It is found in the plastid. The protein localises to the chloroplast. This Gnetum parvifolium (Small-leaved jointfir) protein is Large ribosomal subunit protein bL36c.